A 156-amino-acid chain; its full sequence is Small ribosomal subunit protein uS7 (156 aa).

Belongs to the universal ribosomal protein uS7 family. In terms of assembly, part of the 30S ribosomal subunit. Contacts proteins S9 and S11.

One of the primary rRNA binding proteins, it binds directly to 16S rRNA where it nucleates assembly of the head domain of the 30S subunit. Is located at the subunit interface close to the decoding center, probably blocks exit of the E-site tRNA. This Tremblaya princeps protein is Small ribosomal subunit protein uS7.